We begin with the raw amino-acid sequence, 378 residues long: Transmembrane 6 superfamily member 2 (378 aa).

9 consecutive transmembrane segments (helical) span residues 34 to 54 (LCVV…VYSL), 63 to 83 (PLYA…VIAL), 110 to 130 (IFIC…MAGA), 140 to 160 (LGLY…PGNI), 170 to 190 (PTFF…MRIF), 219 to 239 (LTLI…GLVV), 269 to 289 (MLMY…ALTF), 291 to 311 (GCSW…QAQF), and 332 to 352 (TWAT…LLAL). EXPERA domains lie at 61–186 (YDPL…CWAG) and 217–351 (ADLT…HLLA).

It belongs to the TM6SF family.

The protein resides in the endoplasmic reticulum membrane. The protein localises to the endoplasmic reticulum-Golgi intermediate compartment membrane. Regulator of liver fat metabolism influencing triglyceride secretion and hepatic lipid droplet content. May function as sterol isomerase. The sequence is that of Transmembrane 6 superfamily member 2 (Tm6sf2) from Rattus norvegicus (Rat).